A 100-amino-acid chain; its full sequence is Large ribosomal subunit protein uL23 (100 aa).

This sequence belongs to the universal ribosomal protein uL23 family. Part of the 50S ribosomal subunit. Contacts protein L29, and trigger factor when it is bound to the ribosome.

One of the early assembly proteins it binds 23S rRNA. One of the proteins that surrounds the polypeptide exit tunnel on the outside of the ribosome. Forms the main docking site for trigger factor binding to the ribosome. The protein is Large ribosomal subunit protein uL23 of Synechococcus elongatus (strain ATCC 33912 / PCC 7942 / FACHB-805) (Anacystis nidulans R2).